We begin with the raw amino-acid sequence, 328 residues long: Delta(3,5)-Delta(2,4)-dienoyl-CoA isomerase, mitochondrial (328 aa).

The N-terminal 33 residues, 1–33 (MAAGIVASRRLRDLLTRRLTGSNYPGLSISLRL), are a transit peptide targeting the mitochondrion. Substrate-binding positions include 116-120 (AGIDL) and Gly-174. The residue at position 231 (Lys-231) is an N6-succinyllysine. Phosphoserine is present on Ser-268. Residues 326 to 328 (SKL) carry the Microbody targeting signal motif. Lys-327 bears the N6-acetyllysine mark.

It belongs to the enoyl-CoA hydratase/isomerase family. As to quaternary structure, homohexamer.

It is found in the mitochondrion. The protein localises to the peroxisome. The catalysed reaction is (3E,5Z)-octadienoyl-CoA = (2E,4E)-octadienoyl-CoA. It carries out the reaction (3E,5Z,8Z,11Z,14Z)-eicosapentaenoyl-CoA = (2E,4E,8Z,11Z,14Z)-eicosapentaenoyl-CoA. Its pathway is lipid metabolism; fatty acid beta-oxidation. Its function is as follows. Isomerization of 3-trans,5-cis-dienoyl-CoA to 2-trans,4-trans-dienoyl-CoA. In Homo sapiens (Human), this protein is Delta(3,5)-Delta(2,4)-dienoyl-CoA isomerase, mitochondrial.